The sequence spans 549 residues: Hydroxylamine reductase (549 aa).

Residues C5, C8, C17, and C23 each contribute to the [4Fe-4S] cluster site. Residues H250, E274, C318, C404, C432, C457, E491, and K493 each contribute to the hybrid [4Fe-2O-2S] cluster site. C404 carries the post-translational modification Cysteine persulfide.

The protein belongs to the HCP family. It depends on [4Fe-4S] cluster as a cofactor. Hybrid [4Fe-2O-2S] cluster is required as a cofactor.

It is found in the cytoplasm. It carries out the reaction A + NH4(+) + H2O = hydroxylamine + AH2 + H(+). Its function is as follows. Catalyzes the reduction of hydroxylamine to form NH(3) and H(2)O. This is Hydroxylamine reductase from Geobacter metallireducens (strain ATCC 53774 / DSM 7210 / GS-15).